Consider the following 630-residue polypeptide: Chaperone protein HtpG (630 aa).

Residues 1–336 (MTTTVEQTAE…TADLPLNVSR (336 aa)) form an a; substrate-binding region. Residues 337–551 (EMIQESPILA…EDGYDRQMEK (215 aa)) form a b region. The tract at residues 552-630 (ILQNAGRLQG…VFERSVRSEG (79 aa)) is c.

The protein belongs to the heat shock protein 90 family. Homodimer.

It is found in the cytoplasm. Functionally, molecular chaperone. Has ATPase activity. This is Chaperone protein HtpG from Rhizobium etli (strain ATCC 51251 / DSM 11541 / JCM 21823 / NBRC 15573 / CFN 42).